The primary structure comprises 540 residues: DEAD-box ATP-dependent RNA helicase 57 (540 aa).

The interval 24 to 73 (DFARFRQGPPAPDVASAAAPSPEKKRKRQSKAKAKKSKKRRAEGADSASD) is disordered. The segment covering 47–64 (KKRKRQSKAKAKKSKKRR) has biased composition (basic residues). Residues 101–129 (KSEDSEVVRRRKEVEREIERAAILRKKFD) adopt a coiled-coil conformation. Residues 146-174 (ELVSRYGCDSYLVGNLSKLGFQEPTPIQR) carry the Q motif motif. The Helicase ATP-binding domain occupies 177-347 (IPILLSGREC…RTIMHDAVRV (171 aa)). 190-197 (APTGSGKT) contributes to the ATP binding site. Residues 294–297 (DESD) carry the DEAD box motif. Residues 375–519 (ALRQSFAESL…EVPSWIKALP (145 aa)) enclose the Helicase C-terminal domain.

Belongs to the DEAD box helicase family. DDX52/ROK1 subfamily.

The enzyme catalyses ATP + H2O = ADP + phosphate + H(+). This chain is DEAD-box ATP-dependent RNA helicase 57, found in Oryza sativa subsp. japonica (Rice).